A 367-amino-acid chain; its full sequence is Probable butyrate kinase (367 aa).

It belongs to the acetokinase family.

It is found in the cytoplasm. The enzyme catalyses butanoate + ATP = butanoyl phosphate + ADP. In Bacillus cereus (strain ATCC 10987 / NRS 248), this protein is Probable butyrate kinase.